A 208-amino-acid polypeptide reads, in one-letter code: Probable transcriptional regulator ycf29 (208 aa).

The region spanning 11-118 (KLILIEPEEH…ELIAIISNLI (108 aa)) is the Response regulatory domain. Residue Asp60 is modified to 4-aspartylphosphate. In terms of domain architecture, HTH luxR-type spans 146–208 (TSFSYINLTV…NRIQILSYFN (63 aa)).

It is found in the plastid. Its subcellular location is the chloroplast. This Guillardia theta (Cryptophyte) protein is Probable transcriptional regulator ycf29 (ycf29).